We begin with the raw amino-acid sequence, 156 residues long: Ribonuclease pancreatic (156 aa).

The signal sequence occupies residues 1–28 (MALEKSLALLPLLVLVLLVLGWVQPSLG). Residues 33–43 (AKKFQRQHMDS) are compositionally biased toward basic and acidic residues. Positions 33 to 52 (AKKFQRQHMDSDGSPSSNPT) are disordered. Residues K35 and R38 each contribute to the substrate site. Residue H40 is the Proton acceptor of the active site. Intrachain disulfides connect C54–C112, C68–C123, C86–C138, and C93–C100. N62 carries N-linked (GlcNAc...) asparagine glycosylation. Substrate contacts are provided by residues 69–73 (KPVNT), K94, and R113. Residue N116 is glycosylated (N-linked (GlcNAc...) asparagine). H147 (proton donor) is an active-site residue.

This sequence belongs to the pancreatic ribonuclease family. Monomer. Interacts with and forms tight 1:1 complexes with RNH1. Dimerization of two such complexes may occur. Interaction with RNH1 inhibits this protein.

The protein localises to the secreted. It catalyses the reaction an [RNA] containing cytidine + H2O = an [RNA]-3'-cytidine-3'-phosphate + a 5'-hydroxy-ribonucleotide-3'-[RNA].. It carries out the reaction an [RNA] containing uridine + H2O = an [RNA]-3'-uridine-3'-phosphate + a 5'-hydroxy-ribonucleotide-3'-[RNA].. Endonuclease that catalyzes the cleavage of RNA on the 3' side of pyrimidine nucleotides. Acts on single-stranded and double-stranded RNA. In Saimiri sciureus (Common squirrel monkey), this protein is Ribonuclease pancreatic (RNASE1).